A 277-amino-acid chain; its full sequence is Sulfur carrier protein FdhD (277 aa).

C121 functions as the Cysteine persulfide intermediate in the catalytic mechanism. Residue 260 to 265 (FCKPGR) coordinates Mo-bis(molybdopterin guanine dinucleotide).

This sequence belongs to the FdhD family.

It localises to the cytoplasm. Its function is as follows. Required for formate dehydrogenase (FDH) activity. Acts as a sulfur carrier protein that transfers sulfur from IscS to the molybdenum cofactor prior to its insertion into FDH. The polypeptide is Sulfur carrier protein FdhD (Escherichia coli O6:H1 (strain CFT073 / ATCC 700928 / UPEC)).